We begin with the raw amino-acid sequence, 96 residues long: Large ribosomal subunit protein uL23 (96 aa).

The protein belongs to the universal ribosomal protein uL23 family. As to quaternary structure, part of the 50S ribosomal subunit. Contacts protein L29, and trigger factor when it is bound to the ribosome.

In terms of biological role, one of the early assembly proteins it binds 23S rRNA. One of the proteins that surrounds the polypeptide exit tunnel on the outside of the ribosome. Forms the main docking site for trigger factor binding to the ribosome. The protein is Large ribosomal subunit protein uL23 of Bacillus cytotoxicus (strain DSM 22905 / CIP 110041 / 391-98 / NVH 391-98).